A 474-amino-acid chain; its full sequence is 2-succinylbenzoate--CoA ligase (474 aa).

This sequence belongs to the ATP-dependent AMP-binding enzyme family. MenE subfamily.

The catalysed reaction is 2-succinylbenzoate + ATP + CoA = 2-succinylbenzoyl-CoA + AMP + diphosphate. It functions in the pathway quinol/quinone metabolism; 1,4-dihydroxy-2-naphthoate biosynthesis; 1,4-dihydroxy-2-naphthoate from chorismate: step 5/7. It participates in quinol/quinone metabolism; menaquinone biosynthesis. Functionally, converts 2-succinylbenzoate (OSB) to 2-succinylbenzoyl-CoA (OSB-CoA). This Staphylococcus epidermidis (strain ATCC 12228 / FDA PCI 1200) protein is 2-succinylbenzoate--CoA ligase.